We begin with the raw amino-acid sequence, 388 residues long: Succinate--CoA ligase [ADP-forming] subunit beta (388 aa).

Residues 9–245 enclose the ATP-grasp domain; sequence KELLASYGLP…KSQENERELK (237 aa). Residues Lys46, 53–55, Glu100, Tyr103, and Glu108 each bind ATP; that span reads GRG. Mg(2+)-binding residues include Asn200 and Asp214. Residues Asn265 and 322-324 contribute to the substrate site; that span reads GIV.

This sequence belongs to the succinate/malate CoA ligase beta subunit family. Heterotetramer of two alpha and two beta subunits. Mg(2+) is required as a cofactor.

It carries out the reaction succinate + ATP + CoA = succinyl-CoA + ADP + phosphate. The catalysed reaction is GTP + succinate + CoA = succinyl-CoA + GDP + phosphate. It participates in carbohydrate metabolism; tricarboxylic acid cycle; succinate from succinyl-CoA (ligase route): step 1/1. In terms of biological role, succinyl-CoA synthetase functions in the citric acid cycle (TCA), coupling the hydrolysis of succinyl-CoA to the synthesis of either ATP or GTP and thus represents the only step of substrate-level phosphorylation in the TCA. The beta subunit provides nucleotide specificity of the enzyme and binds the substrate succinate, while the binding sites for coenzyme A and phosphate are found in the alpha subunit. The sequence is that of Succinate--CoA ligase [ADP-forming] subunit beta from Neisseria meningitidis serogroup B (strain ATCC BAA-335 / MC58).